The sequence spans 500 residues: Protein nucleotidyltransferase YdiU (500 aa).

ATP-binding residues include Gly-96, Gly-98, Arg-99, Lys-119, Asp-131, Gly-132, Arg-182, and Arg-189. Asp-258 serves as the catalytic Proton acceptor. Mg(2+)-binding residues include Asn-259 and Asp-268. An ATP-binding site is contributed by Asp-268.

This sequence belongs to the SELO family. Mg(2+) is required as a cofactor. Mn(2+) serves as cofactor.

It catalyses the reaction L-seryl-[protein] + ATP = 3-O-(5'-adenylyl)-L-seryl-[protein] + diphosphate. The catalysed reaction is L-threonyl-[protein] + ATP = 3-O-(5'-adenylyl)-L-threonyl-[protein] + diphosphate. The enzyme catalyses L-tyrosyl-[protein] + ATP = O-(5'-adenylyl)-L-tyrosyl-[protein] + diphosphate. It carries out the reaction L-histidyl-[protein] + UTP = N(tele)-(5'-uridylyl)-L-histidyl-[protein] + diphosphate. It catalyses the reaction L-seryl-[protein] + UTP = O-(5'-uridylyl)-L-seryl-[protein] + diphosphate. The catalysed reaction is L-tyrosyl-[protein] + UTP = O-(5'-uridylyl)-L-tyrosyl-[protein] + diphosphate. Nucleotidyltransferase involved in the post-translational modification of proteins. It can catalyze the addition of adenosine monophosphate (AMP) or uridine monophosphate (UMP) to a protein, resulting in modifications known as AMPylation and UMPylation. The polypeptide is Protein nucleotidyltransferase YdiU (Rhizobium leguminosarum bv. trifolii (strain WSM2304)).